Reading from the N-terminus, the 191-residue chain is Protein UL140 (191 aa).

Residues 28-48 (TLVVFGFIVTLLFFLFMLYFW) form a helical membrane-spanning segment.

The protein resides in the host membrane. This Homo sapiens (Human) protein is Protein UL140 (UL140).